The following is a 68-amino-acid chain: Venom-like beta-defensin (68 aa).

Positions 1-24 (MRLLILFLAVVTLLSLAGPGSAEV) are cleaved as a signal peptide. 3 disulfides stabilise this stretch: Cys33-Cys60, Cys40-Cys54, and Cys47-Cys61.

As to expression, highly expressed in intestine, liver and spleen and expressed at lower levels in brain, kidney, lung, testis and venom gland.

The protein resides in the secreted. Its function is as follows. Potent antimicrobial peptide that displays activity against S.aureus and P.aeruginosa. Does not inhibit growth of E.coli. This chain is Venom-like beta-defensin, found in Ornithorhynchus anatinus (Duckbill platypus).